Consider the following 190-residue polypeptide: Small ribosomal subunit protein uS5 (190 aa).

One can recognise an S5 DRBM domain in the interval 22–85 (FVDKLVHINR…ESAKRNLTRV (64 aa)).

The protein belongs to the universal ribosomal protein uS5 family. In terms of assembly, part of the 30S ribosomal subunit. Contacts proteins S4 and S8.

Its function is as follows. With S4 and S12 plays an important role in translational accuracy. Located at the back of the 30S subunit body where it stabilizes the conformation of the head with respect to the body. The sequence is that of Small ribosomal subunit protein uS5 from Rhodopseudomonas palustris (strain BisA53).